Here is a 975-residue protein sequence, read N- to C-terminus: Glycine dehydrogenase (decarboxylating) (975 aa).

N6-(pyridoxal phosphate)lysine is present on K723.

The protein belongs to the GcvP family. As to quaternary structure, the glycine cleavage system is composed of four proteins: P, T, L and H. It depends on pyridoxal 5'-phosphate as a cofactor.

It catalyses the reaction N(6)-[(R)-lipoyl]-L-lysyl-[glycine-cleavage complex H protein] + glycine + H(+) = N(6)-[(R)-S(8)-aminomethyldihydrolipoyl]-L-lysyl-[glycine-cleavage complex H protein] + CO2. Its function is as follows. The glycine cleavage system catalyzes the degradation of glycine. The P protein binds the alpha-amino group of glycine through its pyridoxal phosphate cofactor; CO(2) is released and the remaining methylamine moiety is then transferred to the lipoamide cofactor of the H protein. This is Glycine dehydrogenase (decarboxylating) from Burkholderia cenocepacia (strain HI2424).